Here is a 281-residue protein sequence, read N- to C-terminus: Bis(5'-nucleosyl)-tetraphosphatase, symmetrical (281 aa).

Belongs to the Ap4A hydrolase family.

It carries out the reaction P(1),P(4)-bis(5'-adenosyl) tetraphosphate + H2O = 2 ADP + 2 H(+). Hydrolyzes diadenosine 5',5'''-P1,P4-tetraphosphate to yield ADP. This Acidovorax ebreus (strain TPSY) (Diaphorobacter sp. (strain TPSY)) protein is Bis(5'-nucleosyl)-tetraphosphatase, symmetrical.